The following is a 196-amino-acid chain: Imidazole glycerol phosphate synthase subunit HisH (196 aa).

A Glutamine amidotransferase type-1 domain is found at 2 to 196 (NVVILDTGCA…AQLLKNFLEM (195 aa)). The active-site Nucleophile is Cys77. Catalysis depends on residues His178 and Glu180.

As to quaternary structure, heterodimer of HisH and HisF.

It is found in the cytoplasm. It carries out the reaction 5-[(5-phospho-1-deoxy-D-ribulos-1-ylimino)methylamino]-1-(5-phospho-beta-D-ribosyl)imidazole-4-carboxamide + L-glutamine = D-erythro-1-(imidazol-4-yl)glycerol 3-phosphate + 5-amino-1-(5-phospho-beta-D-ribosyl)imidazole-4-carboxamide + L-glutamate + H(+). The catalysed reaction is L-glutamine + H2O = L-glutamate + NH4(+). It participates in amino-acid biosynthesis; L-histidine biosynthesis; L-histidine from 5-phospho-alpha-D-ribose 1-diphosphate: step 5/9. IGPS catalyzes the conversion of PRFAR and glutamine to IGP, AICAR and glutamate. The HisH subunit catalyzes the hydrolysis of glutamine to glutamate and ammonia as part of the synthesis of IGP and AICAR. The resulting ammonia molecule is channeled to the active site of HisF. The sequence is that of Imidazole glycerol phosphate synthase subunit HisH from Salmonella choleraesuis (strain SC-B67).